A 322-amino-acid polypeptide reads, in one-letter code: Cytochrome c biogenesis protein CcsA (322 aa).

The next 7 membrane-spanning stretches (helical) occupy residues 9–29, 43–63, 70–90, 142–162, 226–246, 259–274, and 287–307; these read ILTH…LITL, GMIA…IYSG, LYES…VPKI, MLLS…LLVI, VISL…VWAN, ETWA…IYSH, and AIVA…VNLL.

It belongs to the CcmF/CycK/Ccl1/NrfE/CcsA family. In terms of assembly, may interact with Ccs1.

Its subcellular location is the plastid. The protein localises to the chloroplast thylakoid membrane. In terms of biological role, required during biogenesis of c-type cytochromes (cytochrome c6 and cytochrome f) at the step of heme attachment. The protein is Cytochrome c biogenesis protein CcsA of Chloranthus spicatus (Chulantree).